Consider the following 486-residue polypeptide: Nuclear distribution protein PAC1 (486 aa).

Positions 66 to 99 form a coiled coil; sequence STVLRLQKKIIDLENEISNLNNIINSTNSDNNGI. WD repeat units lie at residues 119 to 158, 164 to 205, 206 to 246, 249 to 291, 294 to 328, 329 to 368, 389 to 428, and 437 to 483; these read QCEN…NTIP, AHTR…RTLN, GHEH…SLKS, GHSE…GVAM, GHSH…FPTI, PLEL…IAPH, GHSS…ETGY, and GHDG…NSIK.

Belongs to the WD repeat LIS1/nudF family. As to quaternary structure, self-associates. Interacts with NDL1 and dynein.

The protein localises to the cytoplasm. It is found in the cytoskeleton. The protein resides in the spindle pole. Positively regulates the activity of the minus-end directed microtubule motor protein dynein. Plays a central role in positioning the mitotic spindle at the bud neck during cell division. Targets cytoplasmic dynein to microtubule plus ends, thereby promoting dynein-mediated microtubule sliding along the bud cortex and consequently the movement of the mitotic spindle to the bud neck. In Candida albicans (strain SC5314 / ATCC MYA-2876) (Yeast), this protein is Nuclear distribution protein PAC1.